A 766-amino-acid chain; its full sequence is Semaphorin-4E (766 aa).

A signal peptide spans 1 to 24 (MMSLLAVLCVLYVWSPAMLTGGLG). Residues 25–664 (STLDSLPRKT…LHHVKEKERT (640 aa)) are Extracellular-facing. The 473-residue stretch at 27–499 (LDSLPRKTVP…SEVGVVQLSI (473 aa)) folds into the Sema domain. N-linked (GlcNAc...) asparagine glycosylation is present at N52. 4 disulfides stabilise this stretch: C100-C111, C129-C138, C261-C373, and C285-C329. A glycan (N-linked (GlcNAc...) asparagine) is linked at N433. Residues 501-552 (ECGRYQTCLDCVLARDPHCGWDLDTEHCATINSIHRTRSSTVIQSLNDGDAS) enclose the PSI domain. 2 disulfide bridges follow: C502-C519 and C511-C528. The 86-residue stretch at 555–640 (PAIGVSKPVN…QRKYQTQHVA (86 aa)) folds into the Ig-like C2-type domain. 2 N-linked (GlcNAc...) asparagine glycosylation sites follow: N564 and N612. Cysteines 577 and 623 form a disulfide. Residues 665–685 (LVAMVVILSLVLAALLIWNLY) form a helical membrane-spanning segment. The Cytoplasmic portion of the chain corresponds to 686–766 (KGHLSLPCLH…LKYIDDESEI (81 aa)). The disordered stretch occupies residues 724-750 (FNSNNNHANDQRYSSSRETDRLSTTAG).

This sequence belongs to the semaphorin family.

The protein localises to the membrane. This chain is Semaphorin-4E (sema4e), found in Danio rerio (Zebrafish).